A 585-amino-acid polypeptide reads, in one-letter code: Beta-(1--&gt;2)glucan export ATP-binding/permease protein NdvA (585 aa).

The 281-residue stretch at 21-301 (VGAIVIANIV…MKAFATQIFE (281 aa)) folds into the ABC transmembrane type-1 domain. 6 consecutive transmembrane segments (helical) span residues 22-42 (GAIVIANIVLAAITIAEPILF), 55-75 (VAPMLLLWAGFGVFNTIAFVL), 136-156 (QHLATAVALMLLIPTAFAMDV), 158-178 (LSLILVVLGAAYVMISKVVMS), 245-265 (LNRIASTISMMAILVIGTVLV), and 269-289 (ELGVGEVIAFIGFANLLIGRL). Residues 335-569 (VEFRDISFDF…NGRFAALLRA (235 aa)) form the ABC transporter domain. ATP is bound at residue 368 to 375 (GPTGAGKT).

It belongs to the ABC transporter superfamily. Beta-(1--&gt;2)glucan exporter (TC 3.A.1.108.1) family. In terms of assembly, homodimer.

The protein resides in the cell inner membrane. The enzyme catalyses [(1-&gt;2)-beta-D-glucosyl](n)(in) + ATP + H2O = [(1-&gt;2)-beta-D-glucosyl](n)(out) + ADP + phosphate + H(+). Functionally, involved in beta-(1--&gt;2)glucan export which is required for nodulation of legume roots. May be involved in other classes of oligosaccharides export. Transmembrane domains (TMD) form a pore in the inner membrane and the ATP-binding domain (NBD) is responsible for energy generation. The protein is Beta-(1--&gt;2)glucan export ATP-binding/permease protein NdvA of Rhizobium meliloti (strain 1021) (Ensifer meliloti).